The chain runs to 146 residues: Lipoprotein signal peptidase (146 aa).

3 consecutive transmembrane segments (helical) span residues 10-30 (GLFV…LGGF), 54-74 (FLEG…LLFL), and 80-100 (FFVA…SNIL). Active-site residues include D110 and D127. A helical transmembrane segment spans residues 118–138 (FEFAIFNFADVMIDVAVALFL).

Belongs to the peptidase A8 family.

The protein localises to the cell inner membrane. The catalysed reaction is Release of signal peptides from bacterial membrane prolipoproteins. Hydrolyzes -Xaa-Yaa-Zaa-|-(S,diacylglyceryl)Cys-, in which Xaa is hydrophobic (preferably Leu), and Yaa (Ala or Ser) and Zaa (Gly or Ala) have small, neutral side chains.. It functions in the pathway protein modification; lipoprotein biosynthesis (signal peptide cleavage). Functionally, this protein specifically catalyzes the removal of signal peptides from prolipoproteins. This chain is Lipoprotein signal peptidase, found in Wolinella succinogenes (strain ATCC 29543 / DSM 1740 / CCUG 13145 / JCM 31913 / LMG 7466 / NCTC 11488 / FDC 602W) (Vibrio succinogenes).